The primary structure comprises 504 residues: Signal transduction histidine-protein kinase/phosphatase MprB (504 aa).

At 1 to 26 the chain is on the cytoplasmic side; the sequence is MWWFRRRDRAPLRATSSLSLRWRVML. A helical membrane pass occupies residues 27–47; the sequence is LAMSMVAMVVVLMSFAVYAVI. At 48–163 the chain is on the extracellular side; it reads SAALYSDIDN…PTEAVMNKLR (116 aa). Residues 164 to 184 form a helical membrane-spanning segment; that stretch reads WVLLIVGGIGVAVAAVAGGMV. Over 185-504 the chain is Cytoplasmic; it reads TRAGLRPVGR…SVESQSTRAT (320 aa). The 53-residue stretch at 186 to 238 folds into the HAMP domain; it reads RAGLRPVGRLTEAAERVARTDDLRPIPVFGSDELARLTEAFNLMLRALAESRE. The Histidine kinase domain maps to 246–466; it reads DAGHELRTPL…SIYVLLPGRR (221 aa). His-249 carries the phosphohistidine; by autocatalysis modification. Residues 471–504 are disordered; it reads QLPGATAGARSTDIENSRGSANVISVESQSTRAT. The segment covering 487 to 504 has biased composition (polar residues); sequence SRGSANVISVESQSTRAT.

Mg(2+) serves as cofactor. The cofactor is Mn(2+). Post-translationally, autophosphorylated.

The protein localises to the cell membrane. It catalyses the reaction ATP + protein L-histidine = ADP + protein N-phospho-L-histidine.. Functionally, member of the two-component regulatory system MprB/MprA which contributes to maintaining a balance among several systems involved in stress resistance and is required for establishment and maintenance of persistent infection in the host. In response to environmental signals MprB acts both as a membrane-associated protein kinase that undergoes autophosphorylation and subsequently transfers the phosphate to MprA, and a protein phosphatase that dephosphorylates phospho-MprA. In Mycobacterium tuberculosis (strain ATCC 25177 / H37Ra), this protein is Signal transduction histidine-protein kinase/phosphatase MprB (mprB).